The sequence spans 128 residues: Cystatin-2 (128 aa).

The signal sequence occupies residues Met-1 to Gly-19. One can recognise a Cystatin domain in the interval Gln-29–Trp-116. 2 disulfide bridges follow: Cys-84–Cys-96 and Cys-107–Cys-127.

It belongs to the cystatin family. As to expression, widely expressed. Detected in salivary glands (at protein level), gut (at protein level), ovaries, and Malpighian tubules.

The protein resides in the secreted. Its function is as follows. Inhibitor of cysteine proteinases with broad specificity for mammalian cathepsins, including endopeptidases (cathepsins L and S) and exopeptidases (cathepsins B, C and H). Also inhibits endogenous cathepsin B-like and cathepsin C-like proteinases. Does not inhibit human legumain. May mimic specific host-derived cystatin(s) to interfere with its/their function in controlling cathepsin-mediated proteolysis. Affects the function of antigen-presenting mouse dendritic cells by reducing the production of the pro-inflammatory cytokines TNF and interleukin-12, and proliferation of antigen-specific CD4+ T-cells, suggesting it may suppress the host adaptive immune response. It is noteworthy that immunization of mice with this protein reduces O.moubata survival in infestation experiments. This chain is Cystatin-2, found in Ornithodoros moubata (Soft tick).